Consider the following 141-residue polypeptide: Nucleoside triphosphatase NudI (141 aa).

Positions 1-141 constitute a Nudix hydrolase domain; the sequence is MRQRTIVCPL…RHTLALKGLL (141 aa). The Nudix box motif lies at 38-59; that stretch reads GGVEPGERIEEALRREVREELG.

Belongs to the Nudix hydrolase family. NudI subfamily. As to quaternary structure, monomer. Mg(2+) serves as cofactor.

It catalyses the reaction a ribonucleoside 5'-triphosphate + H2O = a ribonucleoside 5'-phosphate + diphosphate + H(+). The catalysed reaction is a 2'-deoxyribonucleoside 5'-triphosphate + H2O = a 2'-deoxyribonucleoside 5'-phosphate + diphosphate + H(+). The enzyme catalyses dUTP + H2O = dUMP + diphosphate + H(+). It carries out the reaction dTTP + H2O = dTMP + diphosphate + H(+). It catalyses the reaction dCTP + H2O = dCMP + diphosphate + H(+). Catalyzes the hydrolysis of nucleoside triphosphates, with a preference for pyrimidine deoxynucleoside triphosphates (dUTP, dTTP and dCTP). In Salmonella schwarzengrund (strain CVM19633), this protein is Nucleoside triphosphatase NudI.